The following is a 597-amino-acid chain: Protein GRISEA (597 aa).

Positions 1–41 form a DNA-binding region, copper-fist; sequence MPIINGQKMACGPCIRGHRSTKCNHYNERVMVPVRKPGRPL. Zn(2+) contacts are provided by cysteine 11, cysteine 14, cysteine 23, and histidine 25. Disordered regions lie at residues 70–115, 233–352, 407–428, and 467–541; these read PAGT…ASRR, AFVD…PGFG, SRPP…NGNN, and SPNS…SPAL. The segment covering 92-103 has biased composition (polar residues); it reads SPASRTSSNRVT. Positions 104–115 are enriched in low complexity; the sequence is KSGSGSKSASRR. A compositionally biased stretch (gly residues) spans 269 to 281; it reads GGSGGGGCCGGGK. Residues 287-314 show a composition bias toward pro residues; sequence QAPPPVPAPLPTPPQQQMPNIMPPPQPQ. The segment covering 469–495 has biased composition (low complexity); the sequence is NSSHGNSGSADSSANASPSANPLNLAS. Residues 521–530 are compositionally biased toward polar residues; that stretch reads ANESDGSSNA.

The protein localises to the nucleus. Copper-sensing transcription factor that regulates copper uptake by transactivation of Ctr3, a high affinity copper permease. Binds to the palindromic UAS sequence 5'-TGTTGCTCANNNNAGAGCAACT-3'. Also transactivates Sod2, a mitochondrial manganese superoxide dismutase through the palindromic UAS sequence 5'-GTTTGCTCA-3' with 352 bp separating the two inverted repeats. Loss of function indirectly leads to rearrangement of mitochondrial DNA associated with senescence in wild-type strains. This chain is Protein GRISEA, found in Podospora anserina (Pleurage anserina).